The primary structure comprises 66 residues: Omega conotoxin-CVIE (66 aa).

An N-terminal signal peptide occupies residues Val1–Ala17. A propeptide spanning residues Asn18–Arg40 is cleaved from the precursor. 3 cysteine pairs are disulfide-bonded: Cys41-Cys56, Cys48-Cys60, and Cys55-Cys65. At Cys65 the chain carries Cysteine amide.

Belongs to the conotoxin O1 superfamily. Expressed by the venom duct.

It localises to the secreted. Omega-conotoxins act at presynaptic membranes, they bind and block voltage-gated calcium channels. This toxin blocks N-type calcium channels (Cav2.2/CACNA1B). It shows a higher potency when Cav2.2/CACNA1B is only expressed with the ancillary subunit CACNB3 (IC(50)=0.12 nM) than on Cav2.2/CACNA1B expressed with the ancillary subunits CACNA2D1 and CACNB3 (IC(50)=2.6 nM). The Cav2.2/CACNA1B block by this toxin is voltage-independent, whereas the recovery from toxin block is voltage-dependent. There is a low recovery at physiological membrane potential and a high recovery with hyperpolarized potential. This indicates that the toxin has a higher affinity for Cav2.2/CACNA1B in the inactivated state. It is noteworthy that ancillary subunits beta modulate recovery from this toxin block. Cav2.2/CACNA1B expressed with the ancillary subunit CACNB2a (isoform 2a) almost recover completely from this toxin block, whereas Cav2.2/CACNA1B expressed with CACNB3 exhibits relatively weak recovery. Inhibition by this toxin of excitatory synaptic transmission is reversible. In vivo, when tested on rat model of persistent pain, this toxin blocks chronic pain behavior. The sequence is that of Omega conotoxin-CVIE from Conus catus (Cat cone).